The sequence spans 276 residues: Transmembrane protein 53 (276 aa).

The helical transmembrane segment at 170–190 threads the bilayer; sequence LLLLAAFALVVILFHFLLAPF.

It belongs to the TMEM53 family. In terms of tissue distribution, expressed in liver (at protein level).

The protein localises to the nucleus outer membrane. In terms of biological role, negatively regulates bone morphogenetic protein (BMP) signaling in osteoblast lineage cells by blocking cytoplasm-nucleus translocation of phosphorylated SMAD1/5/9 proteins. The chain is Transmembrane protein 53 (Tmem53) from Mus musculus (Mouse).